Here is a 61-residue protein sequence, read N- to C-terminus: [Val1,Thr6]-bradykinyl-Gln,Ser (61 aa).

The signal sequence occupies residues 1–22 (MSILKKSLFLVLFLGLVSFSIC). Positions 23–50 (EEEKREAEEEENEDEIEEQSEEKKRFEP) are excised as a propeptide. A disordered region spans residues 25–61 (EKREAEEEENEDEIEEQSEEKKRFEPVPPGFTPFRQS). Over residues 30 to 42 (EEEENEDEIEEQS) the composition is skewed to acidic residues. A 4-hydroxyproline; in form [Val1,Hyp2,Thr6]-Bradykinyl-Gln,Ser and [Val1,Hyp2,Thr6]-Bradykinin modification is found at proline 52.

This sequence belongs to the frog skin active peptide (FSAP) family. Bradykinin-related peptide subfamily. As to expression, expressed by the skin glands.

The protein localises to the secreted. Functionally, induces contraction of rat ileum smooth muscle (EC(50)=2.73 uM) but has no activity towards smooth muscle from tail artery, urinary bladder or uterus up to concentrations of 100 uM. Binds to both bradykinin receptor B1 (BDKRB1) and B2 (BDKRB2); the effect via BDKRB1 is stronger. [Val1,Hyp2,Thr6]-bradykinin-Gln,Ser: Induces contraction of rat ileum smooth muscle (EC(50)=710 nM) but has no activity towards smooth muscle from tail artery, urinary bladder or uterus up to concentrations of 100 uM. Binds to both bradykinin receptor B1 (BDKRB1) and B2 (BDKRB2); the effect via BDKRB1 is stronger. Induces contraction of guinea pig ileum smooth muscle. This is [Val1,Thr6]-bradykinyl-Gln,Ser from Pithecopus hypochondrialis (Orange-legged leaf frog).